Here is a 211-residue protein sequence, read N- to C-terminus: GTP-binding protein ypt5 (211 aa).

21-28 (GDSAVGKS) contributes to the GTP binding site. An Effector region motif is present at residues 43–51 (RESTIGAAF). GTP-binding positions include 70–74 (DTAGQ) and 128–131 (NKLD). S-geranylgeranyl cysteine attachment occurs at residues Cys209 and Cys211. Cys211 is subject to Cysteine methyl ester.

The protein belongs to the small GTPase superfamily. Rab family.

It localises to the cell membrane. Protein transport. Probably involved in vesicular traffic. The polypeptide is GTP-binding protein ypt5 (ypt5) (Schizosaccharomyces pombe (strain 972 / ATCC 24843) (Fission yeast)).